The sequence spans 132 residues: Small ribosomal subunit protein uS8 (132 aa).

It belongs to the universal ribosomal protein uS8 family. Part of the 30S ribosomal subunit. Contacts proteins S5 and S12.

One of the primary rRNA binding proteins, it binds directly to 16S rRNA central domain where it helps coordinate assembly of the platform of the 30S subunit. This is Small ribosomal subunit protein uS8 from Xanthomonas axonopodis pv. citri (strain 306).